Consider the following 1265-residue polypeptide: Stromal processing peptidase, chloroplastic (1265 aa).

Residues M1–N143 constitute a chloroplast transit peptide. H240 is a binding site for Zn(2+). The Proton acceptor role is filled by E243. H244 serves as a coordination point for Zn(2+). Residue E314 is part of the active site. E321 lines the Zn(2+) pocket.

The protein belongs to the peptidase M16 family. Zn(2+) is required as a cofactor.

The protein localises to the plastid. The protein resides in the chloroplast stroma. Its function is as follows. Cleaves presequences (transit peptides) from chloroplastic protein precursors. Initially recognizes a precursor by binding to the C-terminus of its transit peptide and then removes the transit peptide in a single endoproteolytic step. In a next step, pursues the cleavage of transit peptide to a subfragment form. In Arabidopsis thaliana (Mouse-ear cress), this protein is Stromal processing peptidase, chloroplastic.